We begin with the raw amino-acid sequence, 247 residues long: Isoprenyl transferase (247 aa).

Residue aspartate 18 is part of the active site. Aspartate 18 is a binding site for Mg(2+). Residues 19–22 (GNGR), tryptophan 23, arginine 31, histidine 35, and 63–65 (SSE) contribute to the substrate site. Catalysis depends on asparagine 66, which acts as the Proton acceptor. Substrate-binding positions include tryptophan 67, arginine 69, arginine 186, and 192 to 194 (RLS). Glutamate 205 contributes to the Mg(2+) binding site.

This sequence belongs to the UPP synthase family. In terms of assembly, homodimer. Requires Mg(2+) as cofactor.

Catalyzes the condensation of isopentenyl diphosphate (IPP) with allylic pyrophosphates generating different type of terpenoids. The chain is Isoprenyl transferase from Agrobacterium fabrum (strain C58 / ATCC 33970) (Agrobacterium tumefaciens (strain C58)).